Here is a 432-residue protein sequence, read N- to C-terminus: Muscle cell intermediate filament protein OV71 (432 aa).

The segment at 1–111 (KLIDELEEYK…RVHDQEISEL (111 aa)) is coil 1B. The IF rod domain maps to 1–277 (KLIDELEEYK…KMLEGEENRA (277 aa)). The linker 12 stretch occupies residues 112-128 (QAMAARDTTSENREYFK). The interval 129–277 (NELSSAIRDI…KMLEGEENRA (149 aa)) is coil 2. The tail stretch occupies residues 278-432 (GLRQLVEQVV…HIQRSSHTIS (155 aa)). Positions 310-427 (SRTSFQRSAK…EERASHIQRS (118 aa)) constitute an LTD domain.

It belongs to the intermediate filament family.

This Onchocerca volvulus protein is Muscle cell intermediate filament protein OV71 (OV71).